The sequence spans 376 residues: Flagellin B (376 aa).

Residues 103–130 adopt a coiled-coil conformation; sequence SNSSSERQAIQEEVSALNDELNRIAETT.

Belongs to the bacterial flagellin family. As to quaternary structure, heteromer of multiple flagellin subunits including FlaA, FlaB, FlaC, FlaD and possibly FlaE.

It localises to the secreted. Its subcellular location is the bacterial flagellum. In terms of biological role, flagellin is the subunit protein which polymerizes to form the filaments of bacterial flagella. FlaB is not essential for flagellar synthesis and motility. This is Flagellin B (flaB) from Vibrio anguillarum (Listonella anguillarum).